A 229-amino-acid chain; its full sequence is Large ribosomal subunit protein uL1 (229 aa).

This sequence belongs to the universal ribosomal protein uL1 family. In terms of assembly, part of the 50S ribosomal subunit.

Binds directly to 23S rRNA. The L1 stalk is quite mobile in the ribosome, and is involved in E site tRNA release. Its function is as follows. Protein L1 is also a translational repressor protein, it controls the translation of the L11 operon by binding to its mRNA. This is Large ribosomal subunit protein uL1 from Flavobacterium psychrophilum (strain ATCC 49511 / DSM 21280 / CIP 103535 / JIP02/86).